Reading from the N-terminus, the 354-residue chain is Guanine nucleotide-binding protein G(t) subunit alpha-2 (354 aa).

The segment at 1 to 27 (MGSGASAEDKELAKRSKELEKKLQEDA) is disordered. The N-myristoyl glycine moiety is linked to residue Gly2. Over residues 7-27 (AEDKELAKRSKELEKKLQEDA) the composition is skewed to basic and acidic residues. Residues 32–354 (KTVKLLLLGA…KENLKDCGLF (323 aa)) enclose the G-alpha domain. The G1 motif stretch occupies residues 35–48 (KLLLLGAGESGKST). Residues 40–47 (GAGESGKS), 175–181 (LRSRVKT), 200–204 (DVGGQ), 269–272 (NKKD), and Ala326 contribute to the GTP site. Mg(2+)-binding residues include Ser47 and Thr181. The segment at 173 to 181 (DVLRSRVKT) is G2 motif. Residues 196-205 (FRMFDVGGQR) form a G3 motif region. Residues 265–272 (VLFLNKKD) are G4 motif. Positions 324–329 (TCATDT) are G5 motif.

It belongs to the G-alpha family. G(i/o/t/z) subfamily. As to quaternary structure, g proteins are composed of 3 units; alpha, beta and gamma. The alpha chain contains the guanine nucleotide binding site. Retinal rod outer segment.

The protein resides in the cell projection. It is found in the cilium. It localises to the photoreceptor outer segment. Its subcellular location is the photoreceptor inner segment. Guanine nucleotide-binding proteins (G proteins) are involved as modulators or transducers in various transmembrane signaling systems. Transducin is an amplifier and one of the transducers of a visual impulse that performs the coupling between rhodopsin and cGMP-phosphodiesterase. The protein is Guanine nucleotide-binding protein G(t) subunit alpha-2 (GNAT2) of Bos taurus (Bovine).